We begin with the raw amino-acid sequence, 401 residues long: tRNA(Met) cytidine acetate ligase (401 aa).

ATP is bound by residues 7-20 (IVEY…HLYH), G102, N164, and R189.

Belongs to the TmcAL family.

The protein resides in the cytoplasm. The enzyme catalyses cytidine(34) in elongator tRNA(Met) + acetate + ATP = N(4)-acetylcytidine(34) in elongator tRNA(Met) + AMP + diphosphate. Functionally, catalyzes the formation of N(4)-acetylcytidine (ac(4)C) at the wobble position of elongator tRNA(Met), using acetate and ATP as substrates. First activates an acetate ion to form acetyladenylate (Ac-AMP) and then transfers the acetyl group to tRNA to form ac(4)C34. The protein is tRNA(Met) cytidine acetate ligase of Thermoanaerobacter pseudethanolicus (strain ATCC 33223 / 39E) (Clostridium thermohydrosulfuricum).